The primary structure comprises 480 residues: Acyl-coenzyme A synthetase ACSM6, mitochondrial (480 aa).

A mitochondrion-targeting transit peptide spans methionine 1 to cysteine 21. ATP-binding positions include threonine 226–lysine 234, glutamate 366–threonine 371, aspartate 453, and arginine 468.

The protein belongs to the ATP-dependent AMP-binding enzyme family. In terms of assembly, monomer. Requires Mg(2+) as cofactor. It depends on Mn(2+) as a cofactor.

It is found in the mitochondrion. It carries out the reaction a medium-chain fatty acid + ATP + CoA = a medium-chain fatty acyl-CoA + AMP + diphosphate. In terms of biological role, catalyzes the activation of fatty acids by CoA to produce an acyl-CoA, the first step in fatty acid metabolism. The polypeptide is Acyl-coenzyme A synthetase ACSM6, mitochondrial (ACSM6) (Homo sapiens (Human)).